Reading from the N-terminus, the 419-residue chain is Cytosine permease (419 aa).

The Cytoplasmic segment spans residues 1-19; that stretch reads MSQDNNFSQGPVPQSARKG. Residues 20 to 39 form a helical membrane-spanning segment; that stretch reads VLALTFVMLGLTFFSASMWT. Over 40–51 the chain is Periplasmic; sequence GGTLGTGLSYHD. The helical transmembrane segment at 52–71 threads the bilayer; the sequence is FFLAVLIGNLLLGIYTSFLG. The Cytoplasmic segment spans residues 72 to 100; that stretch reads YIGAKTGLTTHLLARFSFGVKGSWLPSLL. Residues 101-120 traverse the membrane as a helical segment; sequence LGGTQVGWFGVGVAMFAIPV. Residues 121-127 are Periplasmic-facing; that stretch reads GKATGLD. The helical transmembrane segment at 128 to 147 threads the bilayer; the sequence is INLLIAVSGLLMTVTVFFGI. Topologically, residues 148 to 152 are cytoplasmic; it reads SALTV. Residues 153–172 traverse the membrane as a helical segment; sequence LSLIAVPAIACLGGYSVWLA. Over 173 to 192 the chain is Periplasmic; the sequence is VNGMGGLDALKAVVPAQPLD. The helical transmembrane segment at 193–212 threads the bilayer; that stretch reads FNVALALVVGSFISAGTLTA. The Cytoplasmic portion of the chain corresponds to 213–221; that stretch reads DFVRFGRNA. A helical transmembrane segment spans residues 222–242; it reads KLAVLVAMVAFFLGNSLMFIF. The Periplasmic segment spans residues 243–257; sequence GAAGAAALGMADISD. The helical transmembrane segment at 258 to 277 threads the bilayer; it reads VMIAQGLLLPAIVVLGLNIW. The Cytoplasmic portion of the chain corresponds to 278–300; the sequence is TTNDNALYASGLGFANITGMSSK. Residues 301 to 320 form a helical membrane-spanning segment; that stretch reads TLSVINGIIGTVCALWLYNN. Phe-321 is a topological domain (periplasmic). Residues 322 to 341 form a helical membrane-spanning segment; it reads VGWLTFLSAAIPPVGGVIIA. At 342-358 the chain is on the cytoplasmic side; the sequence is DYLMNRRRYEHFATTRM. Residues 359–378 traverse the membrane as a helical segment; that stretch reads MSVNWVAILAVALGIAAGHW. At 379–380 the chain is on the periplasmic side; it reads LP. The chain crosses the membrane as a helical span at residues 381-400; sequence GIVPVNAVLGGALSYLILNP. Residues 401 to 419 lie on the Cytoplasmic side of the membrane; sequence ILNRKTTAAMTHVEANSVE.

This sequence belongs to the purine-cytosine permease (2.A.39) family.

It localises to the cell inner membrane. Functionally, required for cytosine transport into the cell. The protein is Cytosine permease (codB) of Escherichia coli O157:H7.